A 29-amino-acid polypeptide reads, in one-letter code: NAD(P)H-quinone oxidoreductase subunit 5, chloroplastic (29 aa).

The chain crosses the membrane as a helical span at residues 1 to 15 (SGSIIHSMEANVGYS).

The protein belongs to the complex I subunit 5 family. NDH is composed of at least 16 different subunits, 5 of which are encoded in the nucleus.

The protein localises to the plastid. The protein resides in the chloroplast thylakoid membrane. The catalysed reaction is a plastoquinone + NADH + (n+1) H(+)(in) = a plastoquinol + NAD(+) + n H(+)(out). It carries out the reaction a plastoquinone + NADPH + (n+1) H(+)(in) = a plastoquinol + NADP(+) + n H(+)(out). In terms of biological role, NDH shuttles electrons from NAD(P)H:plastoquinone, via FMN and iron-sulfur (Fe-S) centers, to quinones in the photosynthetic chain and possibly in a chloroplast respiratory chain. The immediate electron acceptor for the enzyme in this species is believed to be plastoquinone. Couples the redox reaction to proton translocation, and thus conserves the redox energy in a proton gradient. This Pseudotsuga menziesii (Douglas-fir) protein is NAD(P)H-quinone oxidoreductase subunit 5, chloroplastic.